Consider the following 276-residue polypeptide: UPF0276 protein Caul_0757 (276 aa).

It belongs to the UPF0276 family.

This chain is UPF0276 protein Caul_0757, found in Caulobacter sp. (strain K31).